A 65-amino-acid polypeptide reads, in one-letter code: Large ribosomal subunit protein bL33c (65 aa).

This sequence belongs to the bacterial ribosomal protein bL33 family.

The protein resides in the plastid. It is found in the chloroplast. This chain is Large ribosomal subunit protein bL33c, found in Chara vulgaris (Common stonewort).